Here is a 317-residue protein sequence, read N- to C-terminus: Secreted frizzled-related protein 5 (317 aa).

The signal sequence occupies residues 1 to 29 (MRAAAAGGGVRTAALALLLGALHWAPARC). In terms of domain architecture, FZ spans 48–165 (SKPPQCLDIP…PLDNDLCIAV (118 aa)). 8 disulfides stabilise this stretch: Cys-53-Cys-116, Cys-63-Cys-109, Cys-100-Cys-135, Cys-124-Cys-162, Cys-128-Cys-152, Cys-181-Cys-253, Cys-184-Cys-255, and Cys-198-Cys-303. The region spanning 181-303 (CAQCEMEHSA…AVKFMFSYPC (123 aa)) is the NTR domain.

This sequence belongs to the secreted frizzled-related protein (sFRP) family. Highly expressed in the retinal pigment epithelium (RPE) and pancreas. Weak expression in heart, liver and muscle.

Its subcellular location is the secreted. In terms of biological role, soluble frizzled-related proteins (sFRPS) function as modulators of Wnt signaling through direct interaction with Wnts. They have a role in regulating cell growth and differentiation in specific cell types. SFRP5 may be involved in determining the polarity of photoreceptor, and perhaps, other cells in the retina. The sequence is that of Secreted frizzled-related protein 5 (SFRP5) from Homo sapiens (Human).